A 237-amino-acid chain; its full sequence is Phosphoribosylaminoimidazole-succinocarboxamide synthase (237 aa).

It belongs to the SAICAR synthetase family.

It catalyses the reaction 5-amino-1-(5-phospho-D-ribosyl)imidazole-4-carboxylate + L-aspartate + ATP = (2S)-2-[5-amino-1-(5-phospho-beta-D-ribosyl)imidazole-4-carboxamido]succinate + ADP + phosphate + 2 H(+). The protein operates within purine metabolism; IMP biosynthesis via de novo pathway; 5-amino-1-(5-phospho-D-ribosyl)imidazole-4-carboxamide from 5-amino-1-(5-phospho-D-ribosyl)imidazole-4-carboxylate: step 1/2. This is Phosphoribosylaminoimidazole-succinocarboxamide synthase from Listeria innocua serovar 6a (strain ATCC BAA-680 / CLIP 11262).